The following is a 763-amino-acid chain: Phosphoglycerol transferase I (763 aa).

A run of 4 helical transmembrane segments spans residues 1–21 (MSEL…AWKA), 26–46 (WWFA…ITLY), 77–97 (ILPG…LGWV), and 108–128 (FGYS…SPAF).

Belongs to the OpgB family.

It localises to the cell inner membrane. It carries out the reaction a phosphatidylglycerol + a membrane-derived-oligosaccharide D-glucose = a 1,2-diacyl-sn-glycerol + a membrane-derived-oligosaccharide 6-(glycerophospho)-D-glucose.. It functions in the pathway glycan metabolism; osmoregulated periplasmic glucan (OPG) biosynthesis. Transfers a phosphoglycerol residue from phosphatidylglycerol to the membrane-bound nascent glucan backbones. The polypeptide is Phosphoglycerol transferase I (Citrobacter koseri (strain ATCC BAA-895 / CDC 4225-83 / SGSC4696)).